The sequence spans 642 residues: Threonine--tRNA ligase (642 aa).

Positions 1 to 61 (MPVITLPDGS…ENDATLSIIT (61 aa)) constitute a TGS domain. The tract at residues 243–534 (DHRKIGKQLD…LTEEFAGFFP (292 aa)) is catalytic. The Zn(2+) site is built by Cys-334, His-385, and His-511.

This sequence belongs to the class-II aminoacyl-tRNA synthetase family. Homodimer. Zn(2+) serves as cofactor.

Its subcellular location is the cytoplasm. It catalyses the reaction tRNA(Thr) + L-threonine + ATP = L-threonyl-tRNA(Thr) + AMP + diphosphate + H(+). Functionally, catalyzes the attachment of threonine to tRNA(Thr) in a two-step reaction: L-threonine is first activated by ATP to form Thr-AMP and then transferred to the acceptor end of tRNA(Thr). Also edits incorrectly charged L-seryl-tRNA(Thr). The polypeptide is Threonine--tRNA ligase (Salmonella heidelberg (strain SL476)).